The chain runs to 422 residues: MSASKIPLFKMKGLLLFLSLVKMSLAVPAFPQQPGAQGMAPPGMASLSLETMRQLGSLQGLNALSQYSRLGFGKALNSLWLHGLLPPHNSFPWIGPREHETQQYEYSLPVHPPPLPSQPSLQPHQPGLKPFLQPTAATGVQVTPQKPGPHPPMHPGQLPLQEGELIAPDEPQVAPSENPPTPEVPIMDFADPQFPTVFQIAHSLSRGPMAHNKVPTFYPGMFYMSYGANQLNAPARIGFMSSEEMPGERGSPMAYGTLFPGYGGFRQTLRGLNQNSPKGGDFTVEVDSPVSVTKGPEKGEGPEGSPLQEASPDKGENPALLSQMAPGAHAGLLAFPNDHIPNMARGPAGQRLLGVTPAAADPLITPELAEVYETYGADVTTPLGDGEATMDITMSPDTQQPPMPGNKVHQPQVHNAWRFQEP.

The first 26 residues, 1 to 26 (MSASKIPLFKMKGLLLFLSLVKMSLA), serve as a signal peptide directing secretion. Proline 42 is modified (hydroxyproline). Serine 48 bears the Phosphoserine mark. O-linked (GalNAc...) serine glycosylation is present at serine 117. Residues 271–321 (GLNQNSPKGGDFTVEVDSPVSVTKGPEKGEGPEGSPLQEASPDKGENPALL) are disordered.

Belongs to the ameloblastin family. As to expression, ameloblast-specific.

It localises to the secreted. Its subcellular location is the extracellular space. The protein resides in the extracellular matrix. Functionally, involved in the mineralization and structural organization of enamel. In Rattus norvegicus (Rat), this protein is Ameloblastin (Ambn).